The chain runs to 276 residues: Orotidine 5'-phosphate decarboxylase (276 aa).

Residue Lys-95 is the Proton donor of the active site.

The protein belongs to the OMP decarboxylase family. Type 2 subfamily.

The enzyme catalyses orotidine 5'-phosphate + H(+) = UMP + CO2. The protein operates within pyrimidine metabolism; UMP biosynthesis via de novo pathway; UMP from orotate: step 2/2. This is Orotidine 5'-phosphate decarboxylase (pyrF) from Mycolicibacterium smegmatis (strain ATCC 700084 / mc(2)155) (Mycobacterium smegmatis).